Here is a 649-residue protein sequence, read N- to C-terminus: Nitrosuccinic acid synthase npaA (649 aa).

This sequence belongs to the nitrosuccinic acid synthase family. FAD serves as cofactor.

It catalyses the reaction L-aspartate + 3 NADPH + 3 O2 + 2 H(+) = 2-nitrobutanedioate + 3 NADP(+) + 4 H2O. It participates in mycotoxin biosynthesis. In terms of biological role, nitrosuccinic acid synthase; part of the gene cluster that mediates the biosynthesis of the deadly neurotoxic nitroalkane 3-nitropropanoic acid (3-NPA) that acts as an antimetabolite of succinate and irreversibly inhibits succinate dehydrogenase and disrupts mitochondrial oxidative phosphorylation. NpaA catalyzes the iterative oxidation of L-aspartic acid to nitrosuccinic acid (2-nitrobutanedioate). Alternative amino acid substrates such as L-glutamate and D-aspartate are not accepted by npaA as a substrate, showing the strict substrate specificity toward L-aspartate. The nitrosuccinic acid decarboxylase npaB then facilitates decarboxylation of Nitrosuccinic acid to produce 3-NPA. This chain is Nitrosuccinic acid synthase npaA, found in Aspergillus oryzae (strain ATCC 42149 / RIB 40) (Yellow koji mold).